The sequence spans 712 residues: Ribosomal RNA large subunit methyltransferase K/L (712 aa).

The 112-residue stretch at Gly-46–Leu-157 folds into the THUMP domain.

The protein belongs to the methyltransferase superfamily. RlmKL family.

It is found in the cytoplasm. The catalysed reaction is guanosine(2445) in 23S rRNA + S-adenosyl-L-methionine = N(2)-methylguanosine(2445) in 23S rRNA + S-adenosyl-L-homocysteine + H(+). It carries out the reaction guanosine(2069) in 23S rRNA + S-adenosyl-L-methionine = N(2)-methylguanosine(2069) in 23S rRNA + S-adenosyl-L-homocysteine + H(+). Its function is as follows. Specifically methylates the guanine in position 2445 (m2G2445) and the guanine in position 2069 (m7G2069) of 23S rRNA. The sequence is that of Ribosomal RNA large subunit methyltransferase K/L from Actinobacillus pleuropneumoniae serotype 5b (strain L20).